Here is a 306-residue protein sequence, read N- to C-terminus: Ornithine carbamoyltransferase (306 aa).

Carbamoyl phosphate contacts are provided by residues 54–57, glutamine 81, arginine 105, and 132–135; these read STRT and HPLQ. Residues asparagine 162, aspartate 226, and 230 to 231 each bind L-ornithine; that span reads SM. Carbamoyl phosphate contacts are provided by residues 266–267 and arginine 294; that span reads CL.

It belongs to the aspartate/ornithine carbamoyltransferase superfamily. OTCase family.

Its subcellular location is the cytoplasm. The enzyme catalyses carbamoyl phosphate + L-ornithine = L-citrulline + phosphate + H(+). Its pathway is amino-acid biosynthesis; L-arginine biosynthesis; L-arginine from L-ornithine and carbamoyl phosphate: step 1/3. Functionally, reversibly catalyzes the transfer of the carbamoyl group from carbamoyl phosphate (CP) to the N(epsilon) atom of ornithine (ORN) to produce L-citrulline. This Sulfurisphaera tokodaii (strain DSM 16993 / JCM 10545 / NBRC 100140 / 7) (Sulfolobus tokodaii) protein is Ornithine carbamoyltransferase.